The chain runs to 200 residues: Recombination protein RecR (200 aa).

The C4-type zinc finger occupies 59–74 (CEKCNTFTEAQICEVC). One can recognise a Toprim domain in the interval 82–177 (ALLCVVETPA…AVTRLARGVP (96 aa)).

This sequence belongs to the RecR family.

May play a role in DNA repair. It seems to be involved in an RecBC-independent recombinational process of DNA repair. It may act with RecF and RecO. This Burkholderia mallei (strain NCTC 10247) protein is Recombination protein RecR.